A 476-amino-acid chain; its full sequence is 3-isopropylmalate dehydratase large subunit (476 aa).

Positions 357, 417, and 420 each coordinate [4Fe-4S] cluster.

Belongs to the aconitase/IPM isomerase family. LeuC type 1 subfamily. As to quaternary structure, heterodimer of LeuC and LeuD. [4Fe-4S] cluster is required as a cofactor.

The enzyme catalyses (2R,3S)-3-isopropylmalate = (2S)-2-isopropylmalate. It participates in amino-acid biosynthesis; L-leucine biosynthesis; L-leucine from 3-methyl-2-oxobutanoate: step 2/4. Catalyzes the isomerization between 2-isopropylmalate and 3-isopropylmalate, via the formation of 2-isopropylmaleate. The protein is 3-isopropylmalate dehydratase large subunit of Mycobacterium avium (strain 104).